A 139-amino-acid chain; its full sequence is 3-hydroxyacyl-[acyl-carrier-protein] dehydratase FabZ (139 aa).

The active site involves histidine 47.

This sequence belongs to the thioester dehydratase family. FabZ subfamily.

The protein localises to the cytoplasm. The catalysed reaction is a (3R)-hydroxyacyl-[ACP] = a (2E)-enoyl-[ACP] + H2O. Involved in unsaturated fatty acids biosynthesis. Catalyzes the dehydration of short chain beta-hydroxyacyl-ACPs and long chain saturated and unsaturated beta-hydroxyacyl-ACPs. This is 3-hydroxyacyl-[acyl-carrier-protein] dehydratase FabZ from Clostridium perfringens (strain ATCC 13124 / DSM 756 / JCM 1290 / NCIMB 6125 / NCTC 8237 / Type A).